Here is a 543-residue protein sequence, read N- to C-terminus: Tubby-related protein 1 (543 aa).

Residues 1–290 are disordered; that stretch reads MPLQEETLRE…RASSPPVEVG (290 aa). Basic and acidic residues-rich tracts occupy residues 46-56 and 86-99; these read PETPDSLESKP and FLRDPEAKKRDPRE. 2 stretches are compositionally biased toward acidic residues: residues 110–132 and 244–255; these read GGEENSEEDSDDDDNDDDEEEEE and KKEEEEEVEEEV. The span at 267-276 shows a compositional bias: basic residues; sequence GRAKGKGKKK.

This sequence belongs to the TUB family. In terms of assembly, homodimer. May interact with ABCF1, PSIP1, ZEB1 and HMGB2 (Potential). Interacts with F-actin. Interacts with DNM1. Interacts with TUB. Interacts with TYRO3. As to expression, retina specific. Detected in the outer plexiform layer in photoreceptor cells (at protein level).

It is found in the cytoplasm. Its subcellular location is the cell membrane. The protein localises to the secreted. It localises to the synapse. Functionally, required for normal development of photoreceptor synapses. Required for normal photoreceptor function and for long-term survival of photoreceptor cells. Interacts with cytoskeleton proteins and may play a role in protein transport in photoreceptor cells. Binds lipids, especially phosphatidylinositol 3-phosphate, phosphatidylinositol 4-phosphate, phosphatidylinositol 5-phosphate, phosphatidylinositol 3,4-bisphosphate, phosphatidylinositol 4,5-bisphosphate, phosphatidylinositol 3,4,5-bisphosphate, phosphatidylserine and phosphatidic acid (in vitro). Contribute to stimulation of phagocytosis of apoptotic retinal pigment epithelium (RPE) cells and macrophages. This is Tubby-related protein 1 (Tulp1) from Mus musculus (Mouse).